We begin with the raw amino-acid sequence, 99 residues long: Cytochrome c2 iso-1 (99 aa).

Positions 10, 13, 14, and 75 each coordinate heme c.

This sequence belongs to the cytochrome c family. Binds 1 heme c group covalently per subunit.

Cytochrome c2 is found mainly in purple, non-sulfur, photosynthetic bacteria where it functions as the electron donor to the oxidized bacteriochlorophyll in the photophosphorylation pathway. However, it may also have a role in the respiratory chain and is found in some non-photosynthetic bacteria. The protein is Cytochrome c2 iso-1 of Magnetospirillum fulvum (Rhodospirillum fulvum).